Consider the following 299-residue polypeptide: 33 kDa chaperonin (299 aa).

2 disulfides stabilise this stretch: Cys240–Cys242 and Cys273–Cys276.

It belongs to the HSP33 family. Under oxidizing conditions two disulfide bonds are formed involving the reactive cysteines. Under reducing conditions zinc is bound to the reactive cysteines and the protein is inactive.

It localises to the cytoplasm. Functionally, redox regulated molecular chaperone. Protects both thermally unfolding and oxidatively damaged proteins from irreversible aggregation. Plays an important role in the bacterial defense system toward oxidative stress. In Gloeothece citriformis (strain PCC 7424) (Cyanothece sp. (strain PCC 7424)), this protein is 33 kDa chaperonin.